The primary structure comprises 142 residues: MAWTSVLLMLLAYLTGCGPQPMVHQPPLASSSLGATIRLSCTLSNDHNIGIYSIYWYQQRPGHPPRFLLRYFSHSDKHQGPDIPPRFSGSKDTTRNLGYLSISELQPEDEAVYYCAVGLRSQEKKRMEREWEGEKSYTDLGS.

A signal peptide spans 1 to 19 (MAWTSVLLMLLAYLTGCGP). Residues 20–41 (QPMVHQPPLASSSLGATIRLSC) are framework-1. C41 and C115 are disulfide-bonded. The complementarity-determining-1 stretch occupies residues 42–56 (TLSNDHNIGIYSIYW). Positions 57–70 (YQQRPGHPPRFLLR) are framework-2. Residues 71–81 (YFSHSDKHQGP) are complementarity-determining-2. Residues 82 to 115 (DIPPRFSGSKDTTRNLGYLSISELQPEDEAVYYC) form a framework-3 region.

Belongs to the immunoglobulin superfamily. Interacts with IGLL1. Interacts with SYNV1/HRD1 (via N-terminus); this interaction leads to increased VPREB1A ubiquitination and degradation in pre-B cells, possibly through a lysosomal, not proteasomal, pathway. Only expressed by pre-B-cells.

The protein resides in the endoplasmic reticulum. Its function is as follows. Associates with the Ig-mu chain to form a molecular complex that is expressed on the surface of pre-B-cells. This complex presumably regulates Ig gene rearrangements in the early steps of B-cell differentiation. This is Immunoglobulin iota chain from Mus musculus (Mouse).